Reading from the N-terminus, the 351-residue chain is Neutral protease 2 homolog MGG_10927 (351 aa).

The N-terminal stretch at 1–16 (MKFSIGVSLLATLAGA) is a signal peptide. Positions 17–177 (VNVDMAKRDT…AAFLAKRTIV (161 aa)) are excised as a propeptide. 2 disulfide bridges follow: C181/C253 and C260/C278. A Zn(2+)-binding site is contributed by H303. E304 is a catalytic residue. H307 contacts Zn(2+).

Belongs to the peptidase M35 family. The cofactor is Zn(2+).

It localises to the secreted. The enzyme catalyses Preferential cleavage of bonds with hydrophobic residues in P1'. Also 3-Asn-|-Gln-4 and 8-Gly-|-Ser-9 bonds in insulin B chain.. Functionally, secreted metalloproteinase that allows assimilation of proteinaceous substrates. Shows high activities on basic nuclear substrates such as histone and protamine. The polypeptide is Neutral protease 2 homolog MGG_10927 (Colletotrichum graminicola (strain M1.001 / M2 / FGSC 10212) (Maize anthracnose fungus)).